The sequence spans 230 residues: MADGPPSIPGPLPSSFDSDQDFYNERPMQKVFRKIKEEPLIPLGIGLTSLAFVNAYRALRRGDSKQANRMFRARVAAQGFTVIAMLAGSMYYQKDREKSKELRQLQEQRDAEEKRLKWIRELEARDDEEKAMKARLEQRRQLVQAQRAEEAEAAAAAAATTEEKPEATSGGAGGILSRIGLWPQGEKKEEEKKVAEELVEETAGDKSGKKKNPKSSLGDLGEIISSQKKD.

The segment covering 1 to 12 (MADGPPSIPGPL) has biased composition (pro residues). The interval 1–20 (MADGPPSIPGPLPSSFDSDQ) is disordered. In terms of domain architecture, HIG1 spans 12-103 (LPSSFDSDQD…KDREKSKELR (92 aa)). The next 2 helical transmembrane spans lie at 40-59 (LIPL…YRAL) and 71-93 (FRAR…MYYQ). Positions 93-156 (QKDREKSKEL…RAEEAEAAAA (64 aa)) form a coiled coil. The interval 153 to 230 (AAAAAAATTE…GEIISSQKKD (78 aa)) is disordered. Basic and acidic residues predominate over residues 185–196 (GEKKEEEKKVAE).

Belongs to the RCF1 family. Associates with the respiratory chain complex III/complex IV supercomplex.

The protein resides in the mitochondrion membrane. Cytochrome c oxidase subunit which plays a role in assembly of respiratory supercomplexes. This Fusarium vanettenii (strain ATCC MYA-4622 / CBS 123669 / FGSC 9596 / NRRL 45880 / 77-13-4) (Fusarium solani subsp. pisi) protein is Respiratory supercomplex factor 1, mitochondrial (RCF1).